We begin with the raw amino-acid sequence, 151 residues long: MLLLLLLLLLGPGPGFSEATRRSHVYKRGLLELAGTLDCVGPRSPMAYMNYGCYCGLGGHGEPRDAIDWCCYHHDCCYSRAQDAGCSPKLDRYPWKCMDHHILCGPAENKCQELLCRCDEELAYCLAGTEYHLKYLFFPSILCEKDSPKCN.

Residues Met1 to Ser17 form the signal peptide. A propeptide spanning residues Glu18–Arg28 is cleaved from the precursor. Cystine bridges form between Cys39–Cys97, Cys53–Cys143, Cys55–Cys71, Cys70–Cys125, Cys76–Cys150, Cys77–Cys118, Cys86–Cys111, and Cys104–Cys116. Residues Tyr54, Gly56, and Gly58 each contribute to the Ca(2+) site. Residue His74 is part of the active site. Asp75 provides a ligand contact to Ca(2+). Asp119 is an active-site residue.

It belongs to the phospholipase A2 family. Interacts with PLA2R1; this interaction mediates PLA2G10 clearance and inactivation. The cofactor is Ca(2+). Expressed at high levels in testis and the gastrointestinal tract including stomach and colon. Expressed at lower levels in other tissues including small intestine, uterus, oviduct, lung, thymus, spleen and brain. Expressed in Paneth-like secretory epithelial cells of the colon. Expressed in gastric and ileac epithelial cells and in glandular epithelium of intestinal mucosa (at protein level). Expressed in late spermatogenic cells, spermatocytes and spermatids, but not spermatogonia in seminiferous tubules (at protein level). Expressed mainly in the apical side of endometrial epithelial cells and in the interstitium beneath the epithelium of uterus (at protein level). Expressed in resident spleen macrophages (at protein level). Expressed at outermost layer of hair follicles. Expressed in dorsal root ganglia in both NEFH-positive A-fibers and PRPH-positive C-fibers (at protein level).

Its subcellular location is the secreted. It is found in the lysosome. The protein localises to the cytoplasmic vesicle. The protein resides in the secretory vesicle. It localises to the acrosome. The enzyme catalyses a 1,2-diacyl-sn-glycero-3-phosphocholine + H2O = a 1-acyl-sn-glycero-3-phosphocholine + a fatty acid + H(+). It catalyses the reaction 1-hexadecanoyl-2-(9Z-octadecenoyl)-sn-glycero-3-phosphocholine + H2O = 1-hexadecanoyl-sn-glycero-3-phosphocholine + (9Z)-octadecenoate + H(+). It carries out the reaction 1-octadecanoyl-2-(5Z,8Z,11Z,14Z-eicosatetraenoyl)-sn-glycero-3-phosphocholine + H2O = 1-octadecanoyl-sn-glycero-3-phosphocholine + (5Z,8Z,11Z,14Z)-eicosatetraenoate + H(+). The catalysed reaction is 1,2-dihexadecanoyl-sn-glycero-3-phosphocholine + H2O = 1-hexadecanoyl-sn-glycero-3-phosphocholine + hexadecanoate + H(+). The enzyme catalyses 1-hexadecanoyl-2-(9Z-octadecenoyl)-sn-glycero-3-phosphoglycerol + H2O = 1-hexadecanoyl-sn-glycero-3-phosphoglycerol + (9Z)-octadecenoate + H(+). It catalyses the reaction 1,2-dihexadecanoyl-sn-glycero-3-phospho-(1'-sn-glycerol) + H2O = 1-hexadecanoyl-sn-glycero-3-phospho-(1'-sn-glycerol) + hexadecanoate + H(+). It carries out the reaction 1-hexadecanoyl-2-(9Z-octadecenoyl)-sn-glycero-3-phospho-L-serine + H2O = 1-hexadecanoyl-sn-glycero-3-phospho-L-serine + (9Z)-octadecenoate + H(+). The catalysed reaction is 1-hexadecanoyl-2-(9Z,12Z-octadecadienoyl)-sn-glycero-3-phosphoethanolamine + H2O = 1-hexadecanoyl-sn-glycero-3-phosphoethanolamine + (9Z,12Z)-octadecadienoate + H(+). The enzyme catalyses 1-hexadecanoyl-2-(9Z-octadecenoyl)-sn-glycero-3-phosphate + H2O = 1-hexadecanoyl-sn-glycero-3-phosphate + (9Z)-octadecenoate + H(+). It catalyses the reaction 1-O-hexadecyl-2-acetyl-sn-glycero-3-phosphocholine + H2O = 1-O-hexadecyl-sn-glycero-3-phosphocholine + acetate + H(+). Functionally, secretory calcium-dependent phospholipase A2 that primarily targets extracellular phospholipids. Hydrolyzes the ester bond of the fatty acyl group attached at sn-2 position of phospholipids with preference for phosphatidylcholines and phosphatidylglycerols over phosphatidylethanolamines. Preferentially releases sn-2 omega-6 and omega-3 polyunsaturated fatty acyl (PUFA) chains over saturated fatty acyls. Contributes to phospholipid remodeling of very low-density lipoprotein (VLDL), low-density lipoprotein (LDL) and high-density lipoprotein (HDL) particles. Hydrolyzes LDL phospholipids releasing unsaturated fatty acids that regulate macrophage differentiation toward foam cells. Efficiently hydrolyzes and inactivates PAF, a potent lipid mediator present in oxidized LDL. May act in an autocrine and paracrine manner. Secreted by lung epithelium, targets membrane phospholipids of infiltrating eosinophils, releasing arachidonate and boosting eicosanoid and cysteinyl leukotriene synthesis involved in airway inflammatory response. Secreted by gut epithelium, hydrolyzes dietary and biliary phosphatidylcholines in the gastrointestinal lumen, thereby regulating adipogenesis and body weight. Plays a stem cell regulator role in colon epithelium. Within intracellular compartment, mediates Paneth-like cell differentiation and its stem cell supporting functions by inhibiting Wnt signaling pathway in intestinal stem cell (ISC). Secreted in the intestinal lumen upon inflammation, acts in an autocrine way and promotes prostaglandin E2 synthesis that stimulates the Wnt signaling pathway in ISCs and tissue regeneration. May participate in hair follicle morphogenesis by regulating phosphatidylethanolamines metabolism at the outermost epithelial layer and facilitating melanin synthesis. By generating lysophosphatidylcholines (LPCs) at sperm acrosome controls sperm cell capacitation, acrosome reaction and overall fertility. May promote neurite outgrowth in neuron fibers involved in nociception. Contributes to lipid remodeling of cellular membranes and generation of lipid mediators involved in pathogen clearance. Cleaves sn-2 fatty acyl chains of phosphatidylglycerols and phosphatidylethanolamines, which are major components of membrane phospholipids in bacteria. Displays bactericidal activity against Gram-positive bacteria by directly hydrolyzing phospholipids of the bacterial membrane. In pulmonary epithelium, may contribute to host defense response against adenoviral infection. Prevents adenovirus entry into host cells by hydrolyzing host cell plasma membrane, releasing C16:0 LPCs that inhibit virus-mediated membrane fusion and viral infection. Likely prevents adenoviral entry into the endosomes of host cells. May play a role in maturation and activation of innate immune cells including macrophages, group 2 innate lymphoid cells and mast cells. The polypeptide is Group 10 secretory phospholipase A2 (Pla2g10) (Mus musculus (Mouse)).